Consider the following 61-residue polypeptide: ORF6 protein (61 aa).

The tract at residues 18–24 is important for host Golgi localization; the sequence is IMRTFKV.

The protein belongs to the coronaviruses accessory protein 6 family. Interacts (via C-terminus) with host RAE1 in the NUP98-RAE1 complex; this interaction disrupts the host nuclear import. Interacts with host KPNA2; this interaction may inhibit IFN-beta production by blocking IRF3 nuclear translocation.

It is found in the host endoplasmic reticulum membrane. Its subcellular location is the host Golgi apparatus membrane. Disrupts bidirectional nucleocytoplasmic transport by interacting with the host RAE1-NUP98 complex. Disrupts cell nuclear import complex formation by tethering karyopherin alpha 2 and karyopherin beta 1 to the membrane. Retention of import factors at the ER/Golgi membrane leads to a loss of transport into the nucleus. Prevents STAT1 nuclear translocation in response to interferon signaling, thus blocking the expression of interferon stimulated genes (ISGs) that display multiple antiviral activities. Suppresses IFN-beta production possibly by blocking IRF3 nuclear translocation. Might induce accumulation of host HNRNPA1. In terms of biological role, may play a role in viral double membrane vesicles networks to enhance viral replication. This is ORF6 protein from Homo sapiens (Human).